The chain runs to 89 residues: MSLNAETKAAIVAEYAQSEGDTGSPEVQVALLTASINHLQGHFKAHKGDHHSRRGLLRMVSRRRKLLDYLKGKDLARYQDLIKRLGLRR.

It belongs to the universal ribosomal protein uS15 family. As to quaternary structure, part of the 30S ribosomal subunit. Forms a bridge to the 50S subunit in the 70S ribosome, contacting the 23S rRNA.

Its function is as follows. One of the primary rRNA binding proteins, it binds directly to 16S rRNA where it helps nucleate assembly of the platform of the 30S subunit by binding and bridging several RNA helices of the 16S rRNA. Functionally, forms an intersubunit bridge (bridge B4) with the 23S rRNA of the 50S subunit in the ribosome. The protein is Small ribosomal subunit protein uS15 of Vibrio parahaemolyticus serotype O3:K6 (strain RIMD 2210633).